We begin with the raw amino-acid sequence, 486 residues long: Wax ester synthase/diacylglycerol acyltransferase 11 (486 aa).

Residues 1–192 lie on the Cytoplasmic side of the membrane; sequence MGEDKKTARE…CNSGFFNKIW (192 aa). His144 (proton acceptor) is an active-site residue. A helical transmembrane segment spans residues 193–213; that stretch reads WLFVGLWFILRLLFNTFVDIL. Residues 214–486 lie on the Extracellular side of the membrane; that stretch reads MFALTIFVLR…LERGLYEIEV (273 aa).

It in the N-terminal section; belongs to the long-chain O-acyltransferase family. In terms of tissue distribution, mostly expressed in inflorescences and flowers, especially at the periphery of petal epidermal cells.

The protein resides in the cell membrane. It is found in the endoplasmic reticulum membrane. The enzyme catalyses an acyl-CoA + a 1,2-diacyl-sn-glycerol = a triacyl-sn-glycerol + CoA. The catalysed reaction is a long chain fatty alcohol + a fatty acyl-CoA = a wax ester + CoA. Its pathway is glycerolipid metabolism; triacylglycerol biosynthesis. The protein operates within lipid metabolism. In terms of biological role, bifunctional wax ester synthase/diacylglycerol acyltransferase. Involved in cuticular wax biosynthesis. Required for petals development, probably by mediating the production of fatty acids at the plasma membrane in the petal epidermis acting as lubricants that makes petal elongation smooth in narrow space between the sepals and the anthers inside floral buds. In Arabidopsis thaliana (Mouse-ear cress), this protein is Wax ester synthase/diacylglycerol acyltransferase 11.